A 430-amino-acid polypeptide reads, in one-letter code: Enolase (430 aa).

Q164 is a binding site for (2R)-2-phosphoglycerate. E208 functions as the Proton donor in the catalytic mechanism. Mg(2+) is bound by residues D245, E288, and D315. (2R)-2-phosphoglycerate is bound by residues K340, R369, S370, and K391. The active-site Proton acceptor is K340.

This sequence belongs to the enolase family. Mg(2+) serves as cofactor.

It localises to the cytoplasm. The protein resides in the secreted. Its subcellular location is the cell surface. It carries out the reaction (2R)-2-phosphoglycerate = phosphoenolpyruvate + H2O. The protein operates within carbohydrate degradation; glycolysis; pyruvate from D-glyceraldehyde 3-phosphate: step 4/5. In terms of biological role, catalyzes the reversible conversion of 2-phosphoglycerate (2-PG) into phosphoenolpyruvate (PEP). It is essential for the degradation of carbohydrates via glycolysis. The polypeptide is Enolase (Pyrococcus furiosus (strain ATCC 43587 / DSM 3638 / JCM 8422 / Vc1)).